Here is a 28-residue protein sequence, read N- to C-terminus: Ranatuerin-2B (28 aa).

Residues Cys23 and Cys28 are joined by a disulfide bond.

In terms of tissue distribution, expressed by the skin glands.

It is found in the secreted. Functionally, antibacterial activity against Gram-positive bacterium S.aureus and Gram-negative bacterium E.coli. Has activity against C.albicans. The polypeptide is Ranatuerin-2B (Lithobates berlandieri (Rio Grande leopard frog)).